Consider the following 184-residue polypeptide: uncharacterized protein (184 aa).

Residues 32–52 (PCPRSRTQGQSRRSETHTISR) are disordered.

The protein resides in the mitochondrion. This is an uncharacterized protein from Arabidopsis thaliana (Mouse-ear cress).